Consider the following 380-residue polypeptide: Histone deacetylase-like amidohydrolase (380 aa).

His-144 serves as the catalytic Proton donor/acceptor. Residues Asp-181, His-183, and Asp-269 each coordinate Zn(2+).

The protein belongs to the histone deacetylase family. In terms of assembly, homotetramer; dimer of head-to-head dimers. Zn(2+) serves as cofactor.

Its activity is regulated as follows. Is inhibited by azobenzenes, stilbenes and arylazopyrazoles. Functionally, probable protein deacetylase that catalyzes deacetylation of acetylated lysine residues. In vitro, exhibits high activity against artificial HDAC (histone deacetylase) substrates containing acetylated and trifluoroacetylated lysine residues. Is not able to deacetylate acetylated polyamines. In Pseudomonas aeruginosa (strain ATCC 15692 / DSM 22644 / CIP 104116 / JCM 14847 / LMG 12228 / 1C / PRS 101 / PAO1), this protein is Histone deacetylase-like amidohydrolase.